The chain runs to 330 residues: UPF0353 protein MAP_3434 (330 aa).

2 helical membrane passes run G21–A41 and L63–T83. The 196-residue stretch at V94–I289 folds into the VWFA domain. A helical membrane pass occupies residues A304 to I324.

The protein belongs to the UPF0353 family.

It localises to the cell membrane. This is UPF0353 protein MAP_3434 from Mycolicibacterium paratuberculosis (strain ATCC BAA-968 / K-10) (Mycobacterium paratuberculosis).